Consider the following 555-residue polypeptide: Prespore protein Dp87 (555 aa).

A signal peptide spans 1–22; sequence MRILYLASLLFLITLYLSPTFG. One can recognise a DSCP-N domain in the interval 27–144; the sequence is RDCESHRSEY…RIPRCVGHHG (118 aa). The N-linked (GlcNAc...) asparagine glycan is linked to N103. Follistatin-like domains follow at residues 148-170, 175-197, 209-231, 240-262, 276-298, 304-327, 332-354, and 362-384; these read KCDRMRCPEGFYCEEQGGSACCV, GCGNIQCPWGHYCVNEHGKCRCV, QCRNQHCPHGYSCRVIKGCATCV, LCRGFGCPEGSHCEVLEKHPVCV, ICGSVNCGPGYICTIINGHPTCI, LCNQTRCPHDYQCETISTNIVKCS, ECKWHRCPPGSSCFNSRNGPHCL, and LCKVTQCPTDFSCKMIRGNPTCI. A glycan (N-linked (GlcNAc...) asparagine) is linked at N306. An N-linked (GlcNAc...) asparagine glycan is attached at N418. The segment at 454 to 555 is disordered; sequence TTSATTAGTT…ESSESSSATS (102 aa). Residues 470 to 555 show a composition bias toward low complexity; the sequence is GGSTSDSSAA…ESSESSSATS (86 aa).

It is found in the spore wall. The chain is Prespore protein Dp87 (cotD) from Dictyostelium discoideum (Social amoeba).